The chain runs to 165 residues: Small ribosomal subunit protein bS16 (165 aa).

It belongs to the bacterial ribosomal protein bS16 family.

The sequence is that of Small ribosomal subunit protein bS16 from Azobacteroides pseudotrichonymphae genomovar. CFP2.